The chain runs to 72 residues: MAKEDVIEIQGTIKETLPNAMFKVELENGAEILAHVSGKIRMHYIRILPGDKVTVEMSPYDLTKGRITYRFK.

The 71-residue stretch at 2 to 72 (AKEDVIEIQG…TKGRITYRFK (71 aa)) folds into the S1-like domain.

Belongs to the IF-1 family. Component of the 30S ribosomal translation pre-initiation complex which assembles on the 30S ribosome in the order IF-2 and IF-3, IF-1 and N-formylmethionyl-tRNA(fMet); mRNA recruitment can occur at any time during PIC assembly.

It localises to the cytoplasm. Its function is as follows. One of the essential components for the initiation of protein synthesis. Stabilizes the binding of IF-2 and IF-3 on the 30S subunit to which N-formylmethionyl-tRNA(fMet) subsequently binds. Helps modulate mRNA selection, yielding the 30S pre-initiation complex (PIC). Upon addition of the 50S ribosomal subunit IF-1, IF-2 and IF-3 are released leaving the mature 70S translation initiation complex. This chain is Translation initiation factor IF-1, found in Lactiplantibacillus plantarum (strain ATCC BAA-793 / NCIMB 8826 / WCFS1) (Lactobacillus plantarum).